Here is a 52-residue protein sequence, read N- to C-terminus: Large ribosomal subunit protein eL39 (52 aa).

The protein belongs to the eukaryotic ribosomal protein eL39 family.

This Tetrahymena thermophila (strain SB210) protein is Large ribosomal subunit protein eL39 (RPL39).